A 246-amino-acid polypeptide reads, in one-letter code: Pyridoxine 5'-phosphate synthase (246 aa).

Asn12 is a binding site for 3-amino-2-oxopropyl phosphate. A 1-deoxy-D-xylulose 5-phosphate-binding site is contributed by Asp14 to His15. Arg23 provides a ligand contact to 3-amino-2-oxopropyl phosphate. His48 functions as the Proton acceptor in the catalytic mechanism. 2 residues coordinate 1-deoxy-D-xylulose 5-phosphate: Arg50 and His55. Glu75 (proton acceptor) is an active-site residue. Thr105 is a 1-deoxy-D-xylulose 5-phosphate binding site. His196 functions as the Proton donor in the catalytic mechanism. 3-amino-2-oxopropyl phosphate contacts are provided by residues Gly197 and Gly218–His219.

Belongs to the PNP synthase family. Homooctamer; tetramer of dimers.

The protein resides in the cytoplasm. It carries out the reaction 3-amino-2-oxopropyl phosphate + 1-deoxy-D-xylulose 5-phosphate = pyridoxine 5'-phosphate + phosphate + 2 H2O + H(+). It functions in the pathway cofactor biosynthesis; pyridoxine 5'-phosphate biosynthesis; pyridoxine 5'-phosphate from D-erythrose 4-phosphate: step 5/5. In terms of biological role, catalyzes the complicated ring closure reaction between the two acyclic compounds 1-deoxy-D-xylulose-5-phosphate (DXP) and 3-amino-2-oxopropyl phosphate (1-amino-acetone-3-phosphate or AAP) to form pyridoxine 5'-phosphate (PNP) and inorganic phosphate. This chain is Pyridoxine 5'-phosphate synthase, found in Pseudomonas savastanoi pv. phaseolicola (strain 1448A / Race 6) (Pseudomonas syringae pv. phaseolicola (strain 1448A / Race 6)).